The following is a 430-amino-acid chain: Tol-Pal system protein TolB (430 aa).

The N-terminal stretch at 1–21 (MKQALRVAFGFLILWASVLHA) is a signal peptide.

Belongs to the TolB family. The Tol-Pal system is composed of five core proteins: the inner membrane proteins TolA, TolQ and TolR, the periplasmic protein TolB and the outer membrane protein Pal. They form a network linking the inner and outer membranes and the peptidoglycan layer.

It localises to the periplasm. In terms of biological role, part of the Tol-Pal system, which plays a role in outer membrane invagination during cell division and is important for maintaining outer membrane integrity. TolB occupies a key intermediary position in the Tol-Pal system because it communicates directly with both membrane-embedded components, Pal in the outer membrane and TolA in the inner membrane. The protein is Tol-Pal system protein TolB of Shigella boydii serotype 18 (strain CDC 3083-94 / BS512).